The following is a 454-amino-acid chain: Serine--tRNA ligase (454 aa).

L-serine is bound at residue 247–249 (TAE). ATP contacts are provided by residues 278-280 (RKE) and V294. E301 is a binding site for L-serine. 365-368 (ELAS) contacts ATP. T400 provides a ligand contact to L-serine.

The protein belongs to the class-II aminoacyl-tRNA synthetase family. Type-1 seryl-tRNA synthetase subfamily. As to quaternary structure, homodimer. The tRNA molecule binds across the dimer.

It localises to the cytoplasm. The enzyme catalyses tRNA(Ser) + L-serine + ATP = L-seryl-tRNA(Ser) + AMP + diphosphate + H(+). It carries out the reaction tRNA(Sec) + L-serine + ATP = L-seryl-tRNA(Sec) + AMP + diphosphate + H(+). It functions in the pathway aminoacyl-tRNA biosynthesis; selenocysteinyl-tRNA(Sec) biosynthesis; L-seryl-tRNA(Sec) from L-serine and tRNA(Sec): step 1/1. In terms of biological role, catalyzes the attachment of serine to tRNA(Ser). Is also able to aminoacylate tRNA(Sec) with serine, to form the misacylated tRNA L-seryl-tRNA(Sec), which will be further converted into selenocysteinyl-tRNA(Sec). In Pyrobaculum calidifontis (strain DSM 21063 / JCM 11548 / VA1), this protein is Serine--tRNA ligase.